A 143-amino-acid polypeptide reads, in one-letter code: Actin-depolymerizing factor 2 (143 aa).

The ADF-H domain maps to 5-139 (ASGMAVHDDC…GLDVFRSRAG (135 aa)).

Belongs to the actin-binding proteins ADF family.

Actin-depolymerizing protein. Severs actin filaments (F-actin) and binds to actin monomers. This Petunia hybrida (Petunia) protein is Actin-depolymerizing factor 2 (ADF2).